The sequence spans 362 residues: 3-dehydroquinate synthase (362 aa).

Residues 71-76 (DGEQYK), 105-109 (GVIGD), 129-130 (TT), K142, K151, and 169-172 (CLKT) contribute to the NAD(+) site. Positions 184, 247, and 264 each coordinate Zn(2+).

This sequence belongs to the sugar phosphate cyclases superfamily. Dehydroquinate synthase family. The cofactor is Co(2+). Zn(2+) serves as cofactor. It depends on NAD(+) as a cofactor.

It localises to the cytoplasm. The catalysed reaction is 7-phospho-2-dehydro-3-deoxy-D-arabino-heptonate = 3-dehydroquinate + phosphate. It functions in the pathway metabolic intermediate biosynthesis; chorismate biosynthesis; chorismate from D-erythrose 4-phosphate and phosphoenolpyruvate: step 2/7. Functionally, catalyzes the conversion of 3-deoxy-D-arabino-heptulosonate 7-phosphate (DAHP) to dehydroquinate (DHQ). The chain is 3-dehydroquinate synthase from Salmonella agona (strain SL483).